Reading from the N-terminus, the 52-residue chain is Proteinase inhibitor PSI-1.2 (52 aa).

4 cysteine pairs are disulfide-bonded: Cys-3–Cys-32, Cys-7–Cys-28, Cys-16–Cys-38, and Cys-31–Cys-49.

Potent inhibitor of trypsin and a weaker inhibitor of chymotrypsin. It does not inhibit elastase and subtilisin DY. In Capsicum annuum (Capsicum pepper), this protein is Proteinase inhibitor PSI-1.2.